Consider the following 517-residue polypeptide: Probable cytosol aminopeptidase (517 aa).

Lysine 279 and aspartate 284 together coordinate Mn(2+). Lysine 291 is an active-site residue. Residues aspartate 302, aspartate 361, and glutamate 363 each contribute to the Mn(2+) site. The active site involves arginine 365.

This sequence belongs to the peptidase M17 family. The cofactor is Mn(2+).

It localises to the cytoplasm. It carries out the reaction Release of an N-terminal amino acid, Xaa-|-Yaa-, in which Xaa is preferably Leu, but may be other amino acids including Pro although not Arg or Lys, and Yaa may be Pro. Amino acid amides and methyl esters are also readily hydrolyzed, but rates on arylamides are exceedingly low.. The catalysed reaction is Release of an N-terminal amino acid, preferentially leucine, but not glutamic or aspartic acids.. Functionally, presumably involved in the processing and regular turnover of intracellular proteins. Catalyzes the removal of unsubstituted N-terminal amino acids from various peptides. The protein is Probable cytosol aminopeptidase of Streptomyces coelicolor (strain ATCC BAA-471 / A3(2) / M145).